Reading from the N-terminus, the 282-residue chain is Protein Ku (282 aa).

Residues 9-189 (VNFGLVNVPV…KPELSEAELK (181 aa)) form the Ku domain.

In terms of assembly, homodimer. Interacts with host LigD, maybe via the LigD Pol domain.

Functionally, required for replication of viruses with short cos ends (4 bases). Stimulates dsDNA end-joining by host LigD; in conjunction with M.smegmatis or M.tuberculosis LigD can reconstitute NHEJ in S.cerevisiae. Binds dsDNA with either blunt, 5'- or 3-overhangs, protecting it from host exonuclease degradation. This is Protein Ku (206) from Mycobacterium phage Omega (Mycobacteriophage Omega).